The following is a 377-amino-acid chain: MSVTELKERHMAATQTVNDLREKLKQKRLQLLDTDVSGYARSQGKTPVTFGPTDLVCCRILQGHTGKVYSLDWTPEKNRIVSASQDGRLIVWNALTSQKTHAIKLPCAWVMTCAFSPSGHSVACGGLDSVCSIFNLNSPIDKDGNHPVSRMLSGHKGYVSSCQYVPDEDTHLITSSGDQTCVLWDITTGLRTSVFGGEFQFGHTADVQSVSISSSNPRLFVSGSCDTTARLWDTRVASRAQRTFYCHEGDVNTVKFFPDGNRFGTGSEDGTCRLFDIRTGHQLQVYYQPHGDGDIPHVTSMAFSISGRLLFVRYSNGDCYVWDTLLAKVVLNLGAVQNSHEGXISCLGLSADGXXLCTGSWDTNLKIWAFGGHRSVI.

WD repeat units follow at residues 63–93 (GHTG…IVWN), 105–135 (LPCA…SIFN), 154–185 (GHKG…VLWD), 202–233 (GHTA…RLWD), 246–276 (CHEG…RLFD), 293–323 (GDIP…YVWD), and 339–369 (SHEG…KIWA).

The protein belongs to the WD repeat G protein beta family. G proteins are composed of 3 units, alpha, beta and gamma.

Its subcellular location is the cell membrane. It localises to the endoplasmic reticulum membrane. Its function is as follows. Guanine nucleotide-binding proteins (G proteins) are involved as a modulator or transducer in various transmembrane signaling systems. The beta and gamma chains are required for the GTPase activity, for replacement of GDP by GTP, and for G protein-effector interaction. The sequence is that of Guanine nucleotide-binding protein subunit beta from Nicotiana plumbaginifolia (Leadwort-leaved tobacco).